Here is a 594-residue protein sequence, read N- to C-terminus: Arginine--tRNA ligase (594 aa).

Positions 139 to 149 match the 'HIGH' region motif; the sequence is ANPTGPLHVGH.

Belongs to the class-I aminoacyl-tRNA synthetase family. In terms of assembly, monomer.

It localises to the cytoplasm. The enzyme catalyses tRNA(Arg) + L-arginine + ATP = L-arginyl-tRNA(Arg) + AMP + diphosphate. In Burkholderia mallei (strain NCTC 10247), this protein is Arginine--tRNA ligase.